We begin with the raw amino-acid sequence, 610 residues long: Protein mono-ADP-ribosyltransferase PARP6 (610 aa).

The region spanning 374 to 600 (EMTQGSYLEI…QDPKIQKEIM (227 aa)) is the PARP catalytic domain. The residue at position 580 (Asp-580) is an ADP-ribosyl aspartic acid.

The protein belongs to the ARTD/PARP family. Post-translationally, auto-mono-ADP-ribosylated.

The enzyme catalyses L-aspartyl-[protein] + NAD(+) = 4-O-(ADP-D-ribosyl)-L-aspartyl-[protein] + nicotinamide. It catalyses the reaction L-cysteinyl-[protein] + NAD(+) = S-(ADP-D-ribosyl)-L-cysteinyl-[protein] + nicotinamide + H(+). Mono-ADP-ribosyltransferase that mediates mono-ADP-ribosylation of target proteins. This is Protein mono-ADP-ribosyltransferase PARP6 from Pongo abelii (Sumatran orangutan).